A 185-amino-acid chain; its full sequence is UPF0301 protein PSHAa2600 (185 aa).

This sequence belongs to the UPF0301 (AlgH) family.

The chain is UPF0301 protein PSHAa2600 from Pseudoalteromonas translucida (strain TAC 125).